A 1009-amino-acid chain; its full sequence is DNA ligase 4 (1009 aa).

Disordered regions lie at residues 1–34 (METD…APTL) and 51–72 (KKKP…LSAA). A compositionally biased stretch (basic residues) spans 51–65 (KKKPVGPAGNRRKAG). Glu315, Lys317, Leu318, Arg322, Glu384, Phe424, Glu484, Lys489, Lys506, and Lys508 together coordinate ATP. Lys317 acts as the N6-AMP-lysine intermediate in catalysis. Glu384 serves as a coordination point for Mg(2+). Glu484 provides a ligand contact to Mg(2+). 2 BRCT domains span residues 715-808 (PSGH…PDLL) and 887-995 (PCGW…QHMP).

The protein belongs to the ATP-dependent DNA ligase family. It depends on Mg(2+) as a cofactor.

The protein localises to the nucleus. The enzyme catalyses ATP + (deoxyribonucleotide)n-3'-hydroxyl + 5'-phospho-(deoxyribonucleotide)m = (deoxyribonucleotide)n+m + AMP + diphosphate.. In terms of biological role, DNA ligase involved in DNA non-homologous end joining (NHEJ); required for double-strand break (DSB) repair. The sequence is that of DNA ligase 4 (lig4) from Emericella nidulans (strain FGSC A4 / ATCC 38163 / CBS 112.46 / NRRL 194 / M139) (Aspergillus nidulans).